The primary structure comprises 638 residues: MDLVELDYLSALEDLTFNSKPIIHTLTYIAQENEPYAISIVNAIEKHIQKCPPNCKLPALYLLDSISKNLGAPYTYFFGLHLFSTFMSAYTVVEPRLRLKLDQLLATWKQRPPNSSSLEPVFSPIVTAKIENALLKYKSTILRHQSPLLANTSISSFSAPIDANINSYSSFSDPASSYKPSLPSVPFGFQHISGTSPSPGFITLDSLLSDVNRMIVTEQARFIKNPYDNMAKKRFEILLQLKNVLSSSALPYDQLLAIKNQLAQLEKPASPSTSSVATSAPSVPSALSSISSTPFMKPSIPSTIPTIPSAYSASVSSQPPLTHSYVHPGPQSHKYSLSSGPPASLYNANALTPEESSSIDSLFANLQAAGLVPPSAGGKSQGPQASCTEAVSLTADIDLSKSSLATPRPKLSSLLYENYSNQCANCGRRYGNDPESRKELDKHSDWHFRINKRIRESSLHGINRCWFVMEEEWVNSKEEEDLITETAQEIEEQRQKQMESVRSQYVLTPLDPIAASEPCPICQEKFQSVWHEEAEVWVFMNAVEEEGRIFHATCLQEVRPSENKHSNTNTSTQNLAEAAVSSNIKNATGDASKDSQPDVQNLLQGIDIQSILQALGKRKERDDSMDSMSSKVIKQESK.

In terms of domain architecture, CID spans 1–138 (MDLVELDYLS…KIENALLKYK (138 aa)). Disordered regions lie at residues 318–338 (QPPL…YSLS) and 615–638 (LGKR…QESK).

This is an uncharacterized protein from Schizosaccharomyces pombe (strain 972 / ATCC 24843) (Fission yeast).